The following is a 117-amino-acid chain: Large ribosomal subunit protein uL23 (117 aa).

It belongs to the universal ribosomal protein uL23 family. Part of the 50S ribosomal subunit. Contacts protein L29, and trigger factor when it is bound to the ribosome.

One of the early assembly proteins it binds 23S rRNA. One of the proteins that surrounds the polypeptide exit tunnel on the outside of the ribosome. Forms the main docking site for trigger factor binding to the ribosome. The sequence is that of Large ribosomal subunit protein uL23 from Ruminiclostridium cellulolyticum (strain ATCC 35319 / DSM 5812 / JCM 6584 / H10) (Clostridium cellulolyticum).